Here is a 72-residue protein sequence, read N- to C-terminus: DNA-directed RNA polymerase subunit Rpo10 (72 aa).

C7, C10, C45, and C46 together coordinate Zn(2+).

The protein belongs to the archaeal Rpo10/eukaryotic RPB10 RNA polymerase subunit family. Part of the RNA polymerase complex. It depends on Zn(2+) as a cofactor.

Its subcellular location is the cytoplasm. It catalyses the reaction RNA(n) + a ribonucleoside 5'-triphosphate = RNA(n+1) + diphosphate. Functionally, DNA-dependent RNA polymerase (RNAP) catalyzes the transcription of DNA into RNA using the four ribonucleoside triphosphates as substrates. The sequence is that of DNA-directed RNA polymerase subunit Rpo10 from Methanopyrus kandleri (strain AV19 / DSM 6324 / JCM 9639 / NBRC 100938).